Here is a 356-residue protein sequence, read N- to C-terminus: Cyanuric acid amidohydrolase (356 aa).

The tract at residues 1–99 is RU A; the sequence is MPIAKVHRIA…FLVFERAEGN (99 aa). Residues R52 and 79–80 contribute to the substrate site; that span reads SG. The segment at 106–243 is RU B; that stretch reads ALAIGRAHTP…HEIVVLGMSE (138 aa). Residue K156 is part of the active site. Residues R188 and 226 to 227 each bind substrate; that span reads SS. S226 (nucleophile) is an active-site residue. Positions 249–356 are RU C; that stretch reads LAIAHGVMAD…VAVIAARTMG (108 aa). Mg(2+) is bound at residue E287. Substrate contacts are provided by residues R314 and 333–334; that span reads SG. Residues G336, Q339, G340, P341, and G344 each coordinate Mg(2+).

The protein belongs to the cyclic amide hydrolase (CyAH) family. As to quaternary structure, homotetramer.

The catalysed reaction is cyanurate + H2O = 1-carboxybiuret + H(+). It functions in the pathway xenobiotic degradation; atrazine degradation; biuret from cyanurate: step 1/1. Inhibited by barbituric acid. Its function is as follows. Responsible for the hydrolysis of cyanuric acid, an intermediate formed during catabolism of s-triazine based compounds in herbicides such as atrazine and polymers such as melamine. Catalyzes the hydrolytic opening of the s-triazine ring of cyanuric acid (2,4,6-trihydroxy-s-triazine) to yield carbon dioxide and carboxybiuret, which spontaneously decarboxylates to biuret. The chain is Cyanuric acid amidohydrolase from Azorhizobium caulinodans (strain ATCC 43989 / DSM 5975 / JCM 20966 / LMG 6465 / NBRC 14845 / NCIMB 13405 / ORS 571).